The sequence spans 140 residues: Nucleoside diphosphate kinase (140 aa).

ATP-binding residues include Lys-11, Phe-59, Arg-87, Thr-93, Arg-104, and Asn-114. The active-site Pros-phosphohistidine intermediate is the His-117.

It belongs to the NDK family. As to quaternary structure, homotetramer. Requires Mg(2+) as cofactor.

Its subcellular location is the cytoplasm. It carries out the reaction a 2'-deoxyribonucleoside 5'-diphosphate + ATP = a 2'-deoxyribonucleoside 5'-triphosphate + ADP. The catalysed reaction is a ribonucleoside 5'-diphosphate + ATP = a ribonucleoside 5'-triphosphate + ADP. Its function is as follows. Major role in the synthesis of nucleoside triphosphates other than ATP. The ATP gamma phosphate is transferred to the NDP beta phosphate via a ping-pong mechanism, using a phosphorylated active-site intermediate. The polypeptide is Nucleoside diphosphate kinase (Rhizobium meliloti (strain 1021) (Ensifer meliloti)).